The sequence spans 187 residues: UPF0340 protein SGO_0411 (187 aa).

Belongs to the UPF0340 family.

The sequence is that of UPF0340 protein SGO_0411 from Streptococcus gordonii (strain Challis / ATCC 35105 / BCRC 15272 / CH1 / DL1 / V288).